Reading from the N-terminus, the 190-residue chain is Potassium-transporting ATPase KdpC subunit (190 aa).

A helical membrane pass occupies residues V10–I30.

It belongs to the KdpC family. The system is composed of three essential subunits: KdpA, KdpB and KdpC.

It localises to the cell inner membrane. Its function is as follows. Part of the high-affinity ATP-driven potassium transport (or Kdp) system, which catalyzes the hydrolysis of ATP coupled with the electrogenic transport of potassium into the cytoplasm. This subunit acts as a catalytic chaperone that increases the ATP-binding affinity of the ATP-hydrolyzing subunit KdpB by the formation of a transient KdpB/KdpC/ATP ternary complex. This Herminiimonas arsenicoxydans protein is Potassium-transporting ATPase KdpC subunit.